Consider the following 256-residue polypeptide: Type II phosphatidylinositol 4,5-bisphosphate 4-phosphatase (256 aa).

A compositionally biased stretch (basic and acidic residues) spans Met-1–Ser-10. Residues Met-1 to Pro-25 are disordered. Residues Ile-13–Pro-22 show a composition bias toward polar residues. Cys-106 is an active-site residue. The short motif at Cys-106 to Arg-112 is the CX5R motif element. Helical transmembrane passes span Cys-191–Gly-211 and Trp-226–Ile-246.

The protein resides in the late endosome membrane. The protein localises to the lysosome membrane. It carries out the reaction a 1,2-diacyl-sn-glycero-3-phospho-(1D-myo-inositol-4,5-bisphosphate) + H2O = a 1,2-diacyl-sn-glycero-3-phospho-(1D-myo-inositol-5-phosphate) + phosphate. Catalyzes the hydrolysis of phosphatidylinositol-4,5-bisphosphate (PtdIns-4,5-P2) to phosphatidylinositol-4-phosphate (PtdIns-4-P). In Xenopus laevis (African clawed frog), this protein is Type II phosphatidylinositol 4,5-bisphosphate 4-phosphatase.